We begin with the raw amino-acid sequence, 548 residues long: MAKFMTPVIQDNPSGWGPCAVPEQFRDMPYQPFSKGDRLGKVADWTGATYQDKRYTNKYSSQFGGGSQYAYFHEEDETSFQLVDTARTQKTAYQRNRMRFAQRNLRRDKDRRNMLQFNLQTLPKSAKQKERERIRLQKKFQKQFGVRQKWDQKSQKPRDSSVEVRSDWEVKEEMDFPQLMKMRYLEVSEPQDIECCGALEYYDKAFDRITTRSEKPLRSIKRIFHTVTTTDDPVIRKLAKTQGNVFATDAILATLMSCTRSVYSWDIVVQRVGSKLFFDKRDNSDFDLLTVSETANEPPQDEGNSFNSPRNLAMEATYINHNFSQQCLRMGKERYNFPNPNPFVEDDMDKNEIASVAYRYRRWKLGDDIDLIVRCEHDGVMTGANGEVSFINIKTLNEWDSRHCNGVDWRQKLDSQRGAVIATELKNNSYKLARWTCCALLAGSEYLKLGYVSRYHVKDSSRHVILGTQQFKPNEFASQINLSVENAWGILRCVIDICMKLEEGKYLILKDPNKQVIRVYSLPDGTFSSDEDDEEEEEEEEEEEEEEA.

At Lys-53 the chain carries N6-acetyllysine. A Phosphoserine modification is found at Ser-161. Positions Asp-285–Pro-299 are RNA gate. Positions Pro-523–Ala-548 are disordered. A phosphoserine mark is found at Ser-528 and Ser-529. Residues Ser-529–Ala-548 are compositionally biased toward acidic residues.

This sequence belongs to the eIF-3 subunit D family. In terms of assembly, component of the eukaryotic translation initiation factor 3 (eIF-3) complex, which is composed of 13 subunits: EIF3A, EIF3B, EIF3C, EIF3D, EIF3E, EIF3F, EIF3G, EIF3H, EIF3I, EIF3J, EIF3K, EIF3L and EIF3M. The eIF-3 complex appears to include 3 stable modules: module A is composed of EIF3A, EIF3B, EIF3G and EIF3I; module B is composed of EIF3F, EIF3H, and EIF3M; and module C is composed of EIF3C, EIF3D, EIF3E, EIF3K and EIF3L. EIF3C of module C binds EIF3B of module A and EIF3H of module B, thereby linking the three modules. EIF3J is a labile subunit that binds to the eIF-3 complex via EIF3B. The eIF-3 complex interacts with RPS6KB1 under conditions of nutrient depletion. Mitogenic stimulation leads to binding and activation of a complex composed of MTOR and RPTOR, leading to phosphorylation and release of RPS6KB1 and binding of EIF4B to eIF-3.

Its subcellular location is the cytoplasm. MRNA cap-binding component of the eukaryotic translation initiation factor 3 (eIF-3) complex, a complex required for several steps in the initiation of protein synthesis of a specialized repertoire of mRNAs. The eIF-3 complex associates with the 40S ribosome and facilitates the recruitment of eIF-1, eIF-1A, eIF-2:GTP:methionyl-tRNAi and eIF-5 to form the 43S pre-initiation complex (43S PIC). The eIF-3 complex stimulates mRNA recruitment to the 43S PIC and scanning of the mRNA for AUG recognition. The eIF-3 complex is also required for disassembly and recycling of post-termination ribosomal complexes and subsequently prevents premature joining of the 40S and 60S ribosomal subunits prior to initiation. The eIF-3 complex specifically targets and initiates translation of a subset of mRNAs involved in cell proliferation, including cell cycling, differentiation and apoptosis, and uses different modes of RNA stem-loop binding to exert either translational activation or repression. In the eIF-3 complex, EIF3D specifically recognizes and binds the 7-methylguanosine cap of a subset of mRNAs. The chain is Eukaryotic translation initiation factor 3 subunit D from Bos taurus (Bovine).